Consider the following 597-residue polypeptide: Peptidyl-prolyl cis-trans isomerase-like 2 (597 aa).

Residues 41 to 114 (KKLPFNFCAA…TTDSDENKGD (74 aa)) form the U-box domain. The 156-residue stretch at 328-483 (NKGYVRMETN…NKIVIKDMII (156 aa)) folds into the PPIase cyclophilin-type domain. A compositionally biased stretch (basic and acidic residues) spans 495 to 519 (KKQKEGEEERKREVARQGGTEDDRT). Disordered regions lie at residues 495–521 (KKQK…RTTW) and 560–597 (ATTT…FDGW).

Belongs to the cyclophilin-type PPIase family. PPIL2 subfamily.

It is found in the nucleus. The catalysed reaction is [protein]-peptidylproline (omega=180) = [protein]-peptidylproline (omega=0). It carries out the reaction S-ubiquitinyl-[E2 ubiquitin-conjugating enzyme]-L-cysteine + [acceptor protein]-L-lysine = [E2 ubiquitin-conjugating enzyme]-L-cysteine + N(6)-ubiquitinyl-[acceptor protein]-L-lysine.. It functions in the pathway protein modification; protein ubiquitination. In terms of biological role, may catalyze the cis-trans isomerization of proline imidic peptide bonds in oligopeptides thereby assisting the folding of proteins. May also function as a chaperone, playing a role in intracellular transport of proteins. May also have a protein ubiquitin ligase activity acting as an E3 ubiquitin protein ligase or as a ubiquitin-ubiquitin ligase promoting elongation of ubiquitin chains on proteins. This Neurospora crassa (strain ATCC 24698 / 74-OR23-1A / CBS 708.71 / DSM 1257 / FGSC 987) protein is Peptidyl-prolyl cis-trans isomerase-like 2 (ppi-2).